A 249-amino-acid chain; its full sequence is uncharacterized protein (249 aa).

It belongs to the HAD-like hydrolase superfamily. CbbY/CbbZ/Gph/YieH family.

This is an uncharacterized protein from Schizosaccharomyces pombe (strain 972 / ATCC 24843) (Fission yeast).